The chain runs to 258 residues: Coiled-coil domain-containing protein 107 (258 aa).

Positions 1 to 24 (MASVVSLAGTLGLLLVSALPEVLG) are cleaved as a signal peptide. The segment covering 25 to 35 (DRRSPDRRAHP) has biased composition (basic and acidic residues). Residues 25–63 (DRRSPDRRAHPGDAGQVGPAAAEPRRQSPPSKNQRERAR) form a disordered region. A helical transmembrane segment spans residues 66-86 (ALPLGALYTAAAVAFVLYKCL). Positions 106 to 134 (LQSEQHLAQLTQQLVQTEQHLNSLMAQLD) form a coiled coil. A disordered region spans residues 203–222 (EPLNWNTGTRNLTPPREMQP).

It is found in the membrane. The sequence is that of Coiled-coil domain-containing protein 107 (CCDC107) from Bos taurus (Bovine).